A 122-amino-acid polypeptide reads, in one-letter code: MTTATRQEVLGLYRSIFRLARKWQATSGQMEDTIKEKQYILNEARTLFRKNKNLTDTDLIKQCIDECTARIEIGLHYKIPYPRPIHLPPMGLTPLRGRGLRSQEKLRKLSKPVYLRSHDEVS.

Belongs to the complex I LYR family. In terms of tissue distribution, high levels in adipose tissue.

The protein resides in the nucleus. Functionally, may promote cell proliferation and inhibition of apoptosis of preadipocytes. The polypeptide is LYR motif-containing protein 1 (LYRM1) (Homo sapiens (Human)).